Reading from the N-terminus, the 88-residue chain is UPF0250 protein Sputcn32_2874 (88 aa).

It belongs to the UPF0250 family.

In Shewanella putrefaciens (strain CN-32 / ATCC BAA-453), this protein is UPF0250 protein Sputcn32_2874.